We begin with the raw amino-acid sequence, 757 residues long: Chloride channel protein C (757 aa).

The Cytoplasmic portion of the chain corresponds to 1 to 96 (MGSSLNKPLS…LHLKKTFGKW (96 aa)). The next 11 membrane-spanning stretches (helical) occupy residues 97-117 (IICL…KMVV), 141-161 (FLTF…MVIV), 196-216 (IVSL…GPMI), 253-273 (FISI…IGGV), 292-312 (TFFT…GIGS), 337-357 (LLCF…FVFL), 378-398 (FEAL…SFIF), 462-482 (LLVF…LWVA), 484-504 (GLFV…GQTI), 506-526 (MWFT…AMMA), and 535-555 (IVVI…IILA). CBS domains lie at 600–667 (MSKN…TGEE) and 710–757 (MNSS…NDLF).

It belongs to the chloride channel (TC 2.A.49) family.

It localises to the membrane. Functionally, voltage-gated chloride channel. Chloride channels may have several functions including the regulation of cell volume, membrane potential stabilization and signal transduction. This Dictyostelium discoideum (Social amoeba) protein is Chloride channel protein C (clcC).